A 205-amino-acid polypeptide reads, in one-letter code: Small ribosomal subunit protein mS26 (205 aa).

The N-terminal 27 residues, 1–27 (MLRALSRLGAGTPCRPRAPLVLPARGR), are a transit peptide targeting the mitochondrion.

This sequence belongs to the mitochondrion-specific ribosomal protein mS26 family. In terms of assembly, component of the mitochondrial small ribosomal subunit (mt-SSU). Mature mammalian 55S mitochondrial ribosomes consist of a small (28S) and a large (39S) subunit. The 28S small subunit contains a 12S ribosomal RNA (12S mt-rRNA) and 30 different proteins. The 39S large subunit contains a 16S rRNA (16S mt-rRNA), a copy of mitochondrial valine transfer RNA (mt-tRNA(Val)), which plays an integral structural role, and 52 different proteins.

The protein localises to the mitochondrion. The chain is Small ribosomal subunit protein mS26 (MRPS26) from Homo sapiens (Human).